Reading from the N-terminus, the 433-residue chain is Protein translocase subunit SecY (433 aa).

Transmembrane regions (helical) follow at residues 17–37 (IIFTIFVLIICRFGSFIPIAG), 71–91 (IFALAIMPYITASIIIQLMSV), 117–137 (LTVLLASLQAYGVAVSLESIV), 141–161 (GPVVIIPGLFFKITTVITLVV), 184–204 (LIIFIGIISGVPSAIISMFEL), 212–232 (PLVAIAVCAGVVILISIIIFF), 268–288 (GVIPPIFASSILLFPATLANF), 309–329 (IYILLYVALIMFFSFFYTAIV), 366–386 (LTVVGGIYLSVICIIPELLMN), and 388–408 (YVISLSLGGTSFLIVVNVVLD).

The protein belongs to the SecY/SEC61-alpha family. As to quaternary structure, component of the Sec protein translocase complex. Heterotrimer consisting of SecY, SecE and SecG subunits. The heterotrimers can form oligomers, although 1 heterotrimer is thought to be able to translocate proteins. Interacts with the ribosome. Interacts with SecDF, and other proteins may be involved. Interacts with SecA.

The protein resides in the cell inner membrane. Functionally, the central subunit of the protein translocation channel SecYEG. Consists of two halves formed by TMs 1-5 and 6-10. These two domains form a lateral gate at the front which open onto the bilayer between TMs 2 and 7, and are clamped together by SecE at the back. The channel is closed by both a pore ring composed of hydrophobic SecY resides and a short helix (helix 2A) on the extracellular side of the membrane which forms a plug. The plug probably moves laterally to allow the channel to open. The ring and the pore may move independently. The chain is Protein translocase subunit SecY from Rickettsia bellii (strain RML369-C).